The primary structure comprises 541 residues: Probable inorganic phosphate transporter 1-8 (541 aa).

Residues M1–A28 lie on the Cytoplasmic side of the membrane. The chain crosses the membrane as a helical span at residues I29 to V49. Residues T50–A74 are Extracellular-facing. Residues A75–L95 form a helical membrane-spanning segment. Over G96–K102 the chain is Cytoplasmic. Residues S103–F123 traverse the membrane as a helical segment. Residues S124–T126 lie on the Extracellular side of the membrane. The chain crosses the membrane as a helical span at residues P127–G147. The Cytoplasmic segment spans residues D148 to F168. The helical transmembrane segment at I169–I189 threads the bilayer. Residues I190–A215 are Extracellular-facing. The helical transmembrane segment at D216–W236 threads the bilayer. Residues R237–R297 are Cytoplasmic-facing. Residues H298 to S318 traverse the membrane as a helical segment. The Extracellular segment spans residues Q319–T353. The chain crosses the membrane as a helical span at residues L354–V374. The Cytoplasmic portion of the chain corresponds to G375 to R376. The chain crosses the membrane as a helical span at residues F377–P397. Over Y398 to K404 the chain is Extracellular. The helical transmembrane segment at G405 to P425 threads the bilayer. The Cytoplasmic portion of the chain corresponds to N426 to G447. Residues I448 to A468 form a helical membrane-spanning segment. At Q469–N486 the chain is on the extracellular side. Residues S487–E507 form a helical membrane-spanning segment. The Cytoplasmic segment spans residues S508 to A541. The interval E514–A541 is disordered. Residues M516–V527 show a composition bias toward acidic residues.

This sequence belongs to the major facilitator superfamily. Phosphate:H(+) symporter (TC 2.A.1.9) family.

It localises to the membrane. Functionally, high-affinity transporter for external inorganic phosphate. This is Probable inorganic phosphate transporter 1-8 (PHT1-8) from Oryza sativa subsp. japonica (Rice).